The primary structure comprises 384 residues: Chaperone protein DnaJ (384 aa).

In terms of domain architecture, J spans 5–70 (DYYEVLGVAR…QKKAAYDRFG (66 aa)). The segment at 138-216 (GAQKTINVPG…CRGAGRVQKE (79 aa)) adopts a CR-type zinc-finger fold. Positions 151, 154, 168, 171, 190, 193, 204, and 207 each coordinate Zn(2+). CXXCXGXG motif repeat units follow at residues 151 to 158 (CAACNGTG), 168 to 175 (CPTCSGMG), 190 to 197 (CPTCSGHG), and 204 to 211 (CQECRGAG). The tract at residues 300–322 (KVPPGTQSGKQLRLRGKGMPPLR) is disordered.

It belongs to the DnaJ family. As to quaternary structure, homodimer. Zn(2+) is required as a cofactor.

It is found in the cytoplasm. Its function is as follows. Participates actively in the response to hyperosmotic and heat shock by preventing the aggregation of stress-denatured proteins and by disaggregating proteins, also in an autonomous, DnaK-independent fashion. Unfolded proteins bind initially to DnaJ; upon interaction with the DnaJ-bound protein, DnaK hydrolyzes its bound ATP, resulting in the formation of a stable complex. GrpE releases ADP from DnaK; ATP binding to DnaK triggers the release of the substrate protein, thus completing the reaction cycle. Several rounds of ATP-dependent interactions between DnaJ, DnaK and GrpE are required for fully efficient folding. Also involved, together with DnaK and GrpE, in the DNA replication of plasmids through activation of initiation proteins. The polypeptide is Chaperone protein DnaJ (Paracoccus denitrificans (strain Pd 1222)).